An 83-amino-acid chain; its full sequence is Small ribosomal subunit protein bS16 (83 aa).

Belongs to the bacterial ribosomal protein bS16 family.

This Shewanella baltica (strain OS223) protein is Small ribosomal subunit protein bS16.